The primary structure comprises 148 residues: Protein Smg homolog (148 aa).

This sequence belongs to the Smg family.

This is Protein Smg homolog from Thiobacillus denitrificans (strain ATCC 25259 / T1).